A 425-amino-acid chain; its full sequence is Ribulose bisphosphate carboxylase/oxygenase activase B, chloroplastic (425 aa).

The transit peptide at 1 to 43 (MASAFSSTVGAPASTPTIFLGKKVKNYYHGGNKMKSRVVRVMA) directs the protein to the chloroplast. An ATP-binding site is contributed by 153–160 (GGKGQGKS).

The protein belongs to the RuBisCO activase family.

The protein localises to the plastid. It localises to the chloroplast stroma. Functionally, activation of RuBisCO (ribulose-1,5-bisphosphate carboxylase/oxygenase; EC 4.1.1.39) involves the ATP-dependent carboxylation of the epsilon-amino group of lysine leading to a carbamate structure. In Hordeum vulgare (Barley), this protein is Ribulose bisphosphate carboxylase/oxygenase activase B, chloroplastic (RCAB).